The following is a 394-amino-acid chain: Elongation factor Tu 1 (394 aa).

The 195-residue stretch at 10–204 (KPHVNVGTIG…YLDSYIPEPE (195 aa)) folds into the tr-type G domain. A G1 region spans residues 19-26 (GHVDHGKT). 19 to 26 (GHVDHGKT) provides a ligand contact to GTP. Thr-26 provides a ligand contact to Mg(2+). Residues 60–64 (GITIN) form a G2 region. A G3 region spans residues 81–84 (DCPG). GTP-binding positions include 81–85 (DCPGH) and 136–139 (NKCD). The tract at residues 136–139 (NKCD) is G4. The segment at 174 to 176 (SAL) is G5.

It belongs to the TRAFAC class translation factor GTPase superfamily. Classic translation factor GTPase family. EF-Tu/EF-1A subfamily. As to quaternary structure, monomer.

Its subcellular location is the cytoplasm. The catalysed reaction is GTP + H2O = GDP + phosphate + H(+). In terms of biological role, GTP hydrolase that promotes the GTP-dependent binding of aminoacyl-tRNA to the A-site of ribosomes during protein biosynthesis. The sequence is that of Elongation factor Tu 1 from Serratia proteamaculans (strain 568).